A 269-amino-acid polypeptide reads, in one-letter code: uncharacterized protein (269 aa).

5 helical membrane-spanning segments follow: residues 65–85 (FSLFLTIVMIINLLFGSLFVM), 156–176 (VTSVLLAACRVCLNLMLISMV), 182–202 (YTRILLCIISYGMMIFVWLGF), 206–226 (MMSFMLATWLFAYNIVLNDFW), and 242–262 (TLSAIGGLLLLIHTGPGEFSF). The Di-lysine motif motif lies at 266–269 (KKKW).

This sequence belongs to the SURF4 family.

Its subcellular location is the membrane. This is an uncharacterized protein from Caenorhabditis elegans.